The sequence spans 478 residues: Leukotoxin secretion protein D (478 aa).

Topologically, residues 1–59 (MKIWLSGIYEFFLRYKNTWAEVWKIRKELDHPNRKKDESEFLPAHLDLIETPVSKKPRL) are cytoplasmic. A helical transmembrane segment spans residues 60 to 80 (IAYLIMLFLVVAIVLASVSKV). The Periplasmic portion of the chain corresponds to 81-478 (EIVATAPGKL…ESVTESLRER (398 aa)).

Belongs to the membrane fusion protein (MFP) (TC 8.A.1) family.

Its subcellular location is the cell inner membrane. Involved in the transport of the Leukotoxin. The chain is Leukotoxin secretion protein D (lktD) from Mannheimia haemolytica (Pasteurella haemolytica).